The following is a 121-amino-acid chain: Large ribosomal subunit protein bL20 (121 aa).

It belongs to the bacterial ribosomal protein bL20 family.

Binds directly to 23S ribosomal RNA and is necessary for the in vitro assembly process of the 50S ribosomal subunit. It is not involved in the protein synthesizing functions of that subunit. In Beijerinckia indica subsp. indica (strain ATCC 9039 / DSM 1715 / NCIMB 8712), this protein is Large ribosomal subunit protein bL20.